The chain runs to 576 residues: MRFSQTLIPTLKEEPSEAQVISHKLMLRAGLIRQLGAGIYTWLPMGLKVLRKVETIVRQEMDRAGAQEVLMPSIQPAELWEESGRWKMYGKELLRITDRHNRSFCYGPTHEEVISDLVRREIHSYKQLPANFYQIQTKFRDEVRPRFGIMRGREFLMKDAYSFDIDEAALDKSYRLMFEAYNKIFNRLDLKFRPVEADTGAIGGASSHEFHVLAQSGEDVIASCTHCQYAANLEKAFGIAVDLDGGVPEAMVRVATPGQKSIEEVAAFLKMDKARTVKCLTWHDPEADQWYLLLLRGDHTLNEVKACNATAPLAQIPAPEKAVEALGVAVGYLGAVGAEKFNKPVKILADSALRDVTNMVCGANEEGYHLTGVNWQRDLPKPEFVDLRNVEEGDGCPRCGPGSMELSRGIEVGHVFKLGYKYSEAMGVKVLDEDGKEKPLIMGCYGIGVSRIVAAAIEQNHDENGIIWPLAIAPFEVEVVVMNPNESDAMEKAEEITAQLQAGQLEVLLDDRDERAGSKFKDADLLGAPYRVLVGGRAFKEGVCEVKNRRSGVVEKIPVESVVETLLQWLAQEKKA.

The protein belongs to the class-II aminoacyl-tRNA synthetase family. ProS type 1 subfamily. As to quaternary structure, homodimer.

It is found in the cytoplasm. It catalyses the reaction tRNA(Pro) + L-proline + ATP = L-prolyl-tRNA(Pro) + AMP + diphosphate. Its function is as follows. Catalyzes the attachment of proline to tRNA(Pro) in a two-step reaction: proline is first activated by ATP to form Pro-AMP and then transferred to the acceptor end of tRNA(Pro). As ProRS can inadvertently accommodate and process non-cognate amino acids such as alanine and cysteine, to avoid such errors it has two additional distinct editing activities against alanine. One activity is designated as 'pretransfer' editing and involves the tRNA(Pro)-independent hydrolysis of activated Ala-AMP. The other activity is designated 'posttransfer' editing and involves deacylation of mischarged Ala-tRNA(Pro). The misacylated Cys-tRNA(Pro) is not edited by ProRS. This is Proline--tRNA ligase from Magnetococcus marinus (strain ATCC BAA-1437 / JCM 17883 / MC-1).